The following is a 480-amino-acid chain: Glutamate--tRNA ligase (480 aa).

The short motif at 9–19 (PSPTGNLHIGT) is the 'HIGH' region element. Residues 247–251 (KLSKR) carry the 'KMSKS' region motif. Lys-250 provides a ligand contact to ATP.

Belongs to the class-I aminoacyl-tRNA synthetase family. Glutamate--tRNA ligase type 1 subfamily. Monomer.

The protein resides in the cytoplasm. It carries out the reaction tRNA(Glu) + L-glutamate + ATP = L-glutamyl-tRNA(Glu) + AMP + diphosphate. Functionally, catalyzes the attachment of glutamate to tRNA(Glu) in a two-step reaction: glutamate is first activated by ATP to form Glu-AMP and then transferred to the acceptor end of tRNA(Glu). The protein is Glutamate--tRNA ligase of Nostoc sp. (strain PCC 7120 / SAG 25.82 / UTEX 2576).